The chain runs to 353 residues: Rhodopsin (353 aa).

Residues 1-36 (MNGTEGDNFYVPFSNKTGLARSPYEYPQYYLAEPWK) lie on the Extracellular side of the membrane. N-linked (GlcNAc...) asparagine glycans are attached at residues Asn2 and Asn15. Residues 37 to 61 (YSALAAYMFFLILVGFPVNFLTLFV) form a helical membrane-spanning segment. Residues 62-73 (TVQHKKLRTPLN) lie on the Cytoplasmic side of the membrane. A helical membrane pass occupies residues 74–96 (YILLNLAMANLFMVLFGFTVTMY). Residues 97–110 (TSMNGYFVFGPTMC) lie on the Extracellular side of the membrane. A disulfide bridge links Cys110 with Cys187. The helical transmembrane segment at 111–133 (SIEGFFATLGGEVALWSLVVLAI) threads the bilayer. The short motif at 134–136 (ERY) is the 'Ionic lock' involved in activated form stabilization element. Topologically, residues 134–152 (ERYIVICKPMGNFRFGNTH) are cytoplasmic. A helical membrane pass occupies residues 153–173 (AIMGVAFTWIMALACAAPPLV). Residues 174-202 (GWSRYIPEGMQCSCGPDYYTLNPNFNNES) lie on the Extracellular side of the membrane. Residues 203-224 (YVVYMFVVHFLVPFVIIFFCYG) form a helical membrane-spanning segment. Over 225–252 (RLLCTVKEAAAAQQESASTQKAEKEVTR) the chain is Cytoplasmic. The helical transmembrane segment at 253-274 (MVVLMVIGFLVCWVPYASVAFY) threads the bilayer. The Extracellular segment spans residues 275–286 (IFTHQGSDFGAT). Residues 287–308 (FMTLPAFFAKSSALYNPVIYIL) form a helical membrane-spanning segment. Lys296 bears the N6-(retinylidene)lysine mark. Residues 309–353 (MNKQFRNCMITTLCCGKNPLGDDESGASTSKTEVSSVSTSPVSPA) lie on the Cytoplasmic side of the membrane. The tract at residues 330–353 (DDESGASTSKTEVSSVSTSPVSPA) is disordered. Residues 336–353 (STSKTEVSSVSTSPVSPA) are compositionally biased toward low complexity.

It belongs to the G-protein coupled receptor 1 family. Opsin subfamily. Phosphorylated on some or all of the serine and threonine residues present in the C-terminal region. In terms of processing, contains one covalently linked retinal chromophore. As to expression, short photoreceptor cells.

The protein resides in the membrane. Its subcellular location is the cell projection. The protein localises to the cilium. It is found in the photoreceptor outer segment. Photoreceptor required for image-forming vision at low light intensity. While most salt water fish species use retinal as chromophore, most freshwater fish use 3-dehydroretinal, or a mixture of retinal and 3-dehydroretinal. Light-induced isomerization of 11-cis to all-trans retinal triggers a conformational change that activates signaling via G-proteins. Subsequent receptor phosphorylation mediates displacement of the bound G-protein alpha subunit by arrestin and terminates signaling. The sequence is that of Rhodopsin (RHO) from Lethenteron camtschaticum (Japanese lamprey).